Consider the following 623-residue polypeptide: Sodium-coupled monocarboxylate transporter 2 (623 aa).

Residues 1–10 are Extracellular-facing; it reads METVGRFQAG. The chain crosses the membrane as a helical span at residues 11 to 31; the sequence is DYVVFACLFVVSSGIGVFFAI. At 32–50 the chain is on the cytoplasmic side; sequence KERNKAPSKEFLVGGRQMS. The chain crosses the membrane as a helical span at residues 51 to 71; that stretch reads CGPVALSLTASFMSAVTVIGA. Over 72 to 83 the chain is Extracellular; the sequence is PADVYRFGASYV. The chain crosses the membrane as a helical span at residues 84-104; the sequence is IFGVAYTFVVFFTAELFLPVF. Topologically, residues 105-129 are cytoplasmic; the sequence is YRSGITSTYEYLELRFCKLVRVAAT. Residues 130-150 form a helical membrane-spanning segment; it reads LIYIIQTILYTGVVVYAPALA. Residues 151–158 lie on the Extracellular side of the membrane; that stretch reads LNQVTGFD. The helical transmembrane segment at 159–179 threads the bilayer; sequence LWGSIFATGIVCTFYCTLGGL. At 180-181 the chain is on the cytoplasmic side; that stretch reads KA. Residues 182 to 202 traverse the membrane as a helical segment; sequence VVWTDAFQMVVMVVGFLTVLI. Residues 203 to 236 are Extracellular-facing; that stretch reads QGSSRAGGIENVWSTSRTGGRLQVFDFDVSPLRR. A helical transmembrane segment spans residues 237-257; sequence HTFWTLSVGGTFTWLGIYGVN. Topologically, residues 258–276 are cytoplasmic; sequence QSTIQRCISCKTEGHARWA. The chain crosses the membrane as a helical span at residues 277-297; sequence LYLNLLGLWIILFCAVVSGLI. The Extracellular portion of the chain corresponds to 298–322; that stretch reads MYSYYSHCDPWSSGLISAPDQLMPY. A helical membrane pass occupies residues 323–343; it reads FVMEILGAFPGLPGLFVACAF. Topologically, residues 344–386 are cytoplasmic; the sequence is SGTLSTVAASINALATVMYEDFVSQCFPDLSNRAASWISKALC. Residues 387-407 traverse the membrane as a helical segment; it reads VAFGVACTTMAVAASYMGGIV. Over 408–412 the chain is Extracellular; sequence QAALS. Residues 413–433 form a helical membrane-spanning segment; sequence IHGMCGGPVLGLFSLGILFPF. Topologically, residues 434–438 are cytoplasmic; the sequence is TNLKG. A helical transmembrane segment spans residues 439-459; the sequence is AVGGLIVGISLSFWVGVGAFI. The Extracellular portion of the chain corresponds to 460–510; that stretch reads YPAPSNNTHALELNTAGCNITAAAFEPTSATVTQLTSDRNWLADSWYSMSY. Residues Asn465 and Asn478 are each glycosylated (N-linked (GlcNAc...) asparagine). A helical membrane pass occupies residues 511–531; the sequence is LYYSAVGFIGTVAAGLLITLL. Over 532–623 the chain is Cytoplasmic; sequence TGPMDPKLLK…NETSIVQKKL (92 aa).

The protein belongs to the sodium:solute symporter (SSF) (TC 2.A.21) family.

Its subcellular location is the apical cell membrane. The catalysed reaction is (S)-lactate(out) + Na(+)(out) = (S)-lactate(in) + Na(+)(in). It catalyses the reaction nicotinate(out) + Na(+)(out) = nicotinate(in) + Na(+)(in). The enzyme catalyses pyruvate(out) + Na(+)(out) = pyruvate(in) + Na(+)(in). It carries out the reaction propanoate(out) + Na(+)(out) = propanoate(in) + Na(+)(in). The catalysed reaction is butanoate(out) + Na(+)(out) = butanoate(in) + Na(+)(in). It catalyses the reaction acetoacetate(out) + Na(+)(out) = acetoacetate(in) + Na(+)(in). Functionally, acts as an electroneutral and low-affinity sodium (Na(+))-dependent sodium-coupled solute transporter. Catalyzes the transport across the plasma membrane of many monocarboxylates such as lactate, pyruvate, nicotinate, propionate, butyrate and beta-D-hydroxybutyrate. This Danio rerio (Zebrafish) protein is Sodium-coupled monocarboxylate transporter 2 (slc5a12).